Reading from the N-terminus, the 67-residue chain is Small ribosomal subunit protein eS31 (67 aa).

Zn(2+)-binding residues include C31, C34, C49, and C52. The C4-type zinc finger occupies 31–52; sequence CPKCGAGVFMAEHLNRFACGKC.

It belongs to the eukaryotic ribosomal protein eS31 family. Part of the 30S ribosomal subunit. It depends on Zn(2+) as a cofactor.

The sequence is that of Small ribosomal subunit protein eS31 from Methanococcus maripaludis (strain C6 / ATCC BAA-1332).